A 127-amino-acid chain; its full sequence is uncharacterized protein (127 aa).

The disordered stretch occupies residues 1–24 (PLKTKPIDNNLPHRTGYNQASKQQ).

This is an uncharacterized protein from Homo sapiens (Human).